We begin with the raw amino-acid sequence, 699 residues long: Methylcrotonoyl-CoA carboxylase subunit alpha, mitochondrial (699 aa).

The Biotin carboxylation domain occupies 30–475 (ITKILIANRG…ETGFIPIHRE (446 aa)). Lysine 144, glutamate 228, and histidine 263 together coordinate ATP. Residues 148-345 (KDIMIKAGVP…LVEWQLKVAE (198 aa)) form the ATP-grasp domain. Arginine 320 is an active-site residue. The Biotinyl-binding domain occupies 624-699 (KGADGVLGSL…EDKKTLAVIV (76 aa)). Lysine 665 is subject to N6-biotinyllysine.

Probably a dodecamer composed of six biotin-containing alpha subunits and six beta subunits. The cofactor is Mn(2+). It depends on biotin as a cofactor.

It is found in the mitochondrion matrix. It catalyses the reaction 3-methylbut-2-enoyl-CoA + hydrogencarbonate + ATP = 3-methyl-(2E)-glutaconyl-CoA + ADP + phosphate + H(+). It participates in amino-acid degradation; L-leucine degradation; (S)-3-hydroxy-3-methylglutaryl-CoA from 3-isovaleryl-CoA: step 2/3. Functionally, biotin-attachment subunit of the 3-methylcrotonyl-CoA carboxylase, an enzyme that catalyzes the conversion of 3-methylcrotonyl-CoA to 3-methylglutaconyl-CoA, a critical step for leucine and isovaleric acid catabolism. The sequence is that of Methylcrotonoyl-CoA carboxylase subunit alpha, mitochondrial (mccA) from Dictyostelium discoideum (Social amoeba).